A 652-amino-acid polypeptide reads, in one-letter code: MSQIHKHPIPAAIAEHALITPEKYQHYYQQSVQNPDEFWGEQGKIIDWIKPYKTVKNTSFDPGHVSIRWFEDGTLNLAANCLDRHLAERGDQTAIIWEGDDPNQSKTVTYKQLHHDVCQFANVLKSLGVKKGDVVAIYMPMVPEAAVAMLACARIGAVHSVIFGGFSPDAVAGRIIDSHSKLVITADEGIRAGRAIPLKKNVDEALKNPAITSIKNVVVFQRTGNASYWEDGRDVWWHDLIKEASADCPPEEMNAEDPLFILYTSGSTGKPKGVVHTTGGYLVYAALTFKYVFDYHPGDIYWCTADVGWVTGHSYLLYGPLACGAITLMFEGVPNYPGVNRLSQVVDKHKVNILYTAPTAIRALMAEGDKAIEGTKRDSLRIMGSVGEPINPEAWEWYYNKIGNSKCPIVDTWWQTETGGFMITPLPGATELKAGSATRPFFGVQPALVDNLGNPQEGVAEGNLVITDSWPGQARTLFGDHERFEQTYFSTFKGMYFSGDGARRDEDGYYWITGRVDDVLNVSGHRLGTAEIESALVAHPKIAEAAVVGVPHNIKGQAIYAYITLNHGEEPTPELYTEVRNWVRKEIGPLATPDILHWTDSLPKTRSGKIMRRILRKIATGDTSNLGDTSTLADPSVVEKLLEEKQSMQTPS.

CoA is bound by residues 191–194 (RAGR), Thr311, and Asn335. Residues 387–389 (GEP), 411–416 (DTWWQT), Asp500, and Arg515 contribute to the ATP site. Residue Ser523 participates in CoA binding. Position 526 (Arg526) interacts with ATP. Positions 537, 539, and 542 each coordinate Mg(2+). Arg584 provides a ligand contact to CoA. An N6-acetyllysine modification is found at Lys609.

The protein belongs to the ATP-dependent AMP-binding enzyme family. Requires Mg(2+) as cofactor. Post-translationally, acetylated. Deacetylation by the SIR2-homolog deacetylase activates the enzyme.

It carries out the reaction acetate + ATP + CoA = acetyl-CoA + AMP + diphosphate. In terms of biological role, catalyzes the conversion of acetate into acetyl-CoA (AcCoA), an essential intermediate at the junction of anabolic and catabolic pathways. Acs undergoes a two-step reaction. In the first half reaction, Acs combines acetate with ATP to form acetyl-adenylate (AcAMP) intermediate. In the second half reaction, it can then transfer the acetyl group from AcAMP to the sulfhydryl group of CoA, forming the product AcCoA. Enables the cell to use acetate during aerobic growth to generate energy via the TCA cycle, and biosynthetic compounds via the glyoxylate shunt. Acetylates CheY, the response regulator involved in flagellar movement and chemotaxis. The chain is Acetyl-coenzyme A synthetase from Yersinia pestis.